The primary structure comprises 139 residues: FLYWCH family member 2 (139 aa).

2 disordered regions span residues 1-36 and 86-139; these read MPQP…PRKP and EAQR…STSP. Over residues 98–107 the composition is skewed to basic and acidic residues; sequence PEQKRSKQNL. A compositionally biased stretch (low complexity) spans 120 to 130; sequence VSSSSSEETTV.

This is FLYWCH family member 2 (Flywch2) from Mus musculus (Mouse).